We begin with the raw amino-acid sequence, 318 residues long: NADH-ubiquinone oxidoreductase chain 1 (318 aa).

The next 8 membrane-spanning stretches (helical) occupy residues 3–23, 69–89, 100–120, 135–155, 171–191, 213–233, 253–273, and 294–314; these read TTNI…LTLV, FMFT…WIPL, LGIL…LWSG, AVAQ…SLVL, HMWL…STLA, VEYA…NIIL, ELHT…FLWI, and LPLT…FASI.

This sequence belongs to the complex I subunit 1 family.

It is found in the mitochondrion inner membrane. It catalyses the reaction a ubiquinone + NADH + 5 H(+)(in) = a ubiquinol + NAD(+) + 4 H(+)(out). In terms of biological role, core subunit of the mitochondrial membrane respiratory chain NADH dehydrogenase (Complex I) that is believed to belong to the minimal assembly required for catalysis. Complex I functions in the transfer of electrons from NADH to the respiratory chain. The immediate electron acceptor for the enzyme is believed to be ubiquinone. The protein is NADH-ubiquinone oxidoreductase chain 1 (MT-ND1) of Choloepus didactylus (Southern two-toed sloth).